The sequence spans 431 residues: Enolase (431 aa).

Gln167 lines the (2R)-2-phosphoglycerate pocket. The active-site Proton donor is Glu209. Positions 246, 289, and 316 each coordinate Mg(2+). (2R)-2-phosphoglycerate contacts are provided by Lys341, Arg370, Ser371, and Lys392. The active-site Proton acceptor is Lys341.

It belongs to the enolase family. In terms of assembly, component of the RNA degradosome, a multiprotein complex involved in RNA processing and mRNA degradation. Mg(2+) is required as a cofactor.

The protein localises to the cytoplasm. The protein resides in the secreted. It is found in the cell surface. The catalysed reaction is (2R)-2-phosphoglycerate = phosphoenolpyruvate + H2O. It participates in carbohydrate degradation; glycolysis; pyruvate from D-glyceraldehyde 3-phosphate: step 4/5. Catalyzes the reversible conversion of 2-phosphoglycerate (2-PG) into phosphoenolpyruvate (PEP). It is essential for the degradation of carbohydrates via glycolysis. In Shewanella woodyi (strain ATCC 51908 / MS32), this protein is Enolase.